The sequence spans 408 residues: Secreted effector protein SseJ (408 aa).

The Nucleophile role is filled by Ser151. Active-site residues include Asp381 and His384.

This sequence belongs to the 'GDSL' lipolytic enzyme family. As to quaternary structure, interacts with RhoA and indirectly with SifA.

The protein resides in the secreted. It localises to the host cytoplasm. In terms of biological role, effector proteins function to alter host cell physiology and promote bacterial survival in host tissues. This protein is required for endosomal tubulation and negatively regulates the formation of Salmonella-induced filaments (Sifs) in epithelial cells. Has both deacylase and esterification activities in vitro, but esterification is probably the dominant activity in host cells. Significantly contributes to cholesterol esterification, which reduces cellular cholesterol in cells and abrogates the ability of SifA to associate with cholesterol and LAMP-1 vesicles. This Salmonella typhimurium (strain LT2 / SGSC1412 / ATCC 700720) protein is Secreted effector protein SseJ (sseJ).